The primary structure comprises 442 residues: MSIITDIYAREVLDSRGNPTVEVELYTESGAFGRGIVPSGASTGEHEAVELRDGDKSRFMGKGVTKAVDNVNKLIAKEIVGYDVTDQRAIDQAMIKLDGTPNKAKLGANAILGVSIAAARAAADELEMPLYNYLGGFNAHVLPTPMMNVINGGAHANNDVDFQEFMIMPVGASSVKEAIRMGSETFHNLKAILNERGYSTAVGDEGGFAPDLKNNEEPFEILVEAIERAGYKPGKDIAIAFDCAASEFYNEETGKYDLKGEGENGQSFTAEEFVDLLDSIVDKYPIVSIEDPLDENNWEDWQMATAKLGKKVQIVGDDLFVTNTDYLAKGIKMGVANSILIKVNQIGTLTETVEAIEMAKEAGYTAIVSHRSGETEDTTIADLVVAMNAGQIKTGSMSRTERIAKYNQLMRIEDQLESTSEYKGIHGFYNLDEAARNTITSK.

The interval Lys73–His140 is binds human collagen. Gln163 provides a ligand contact to (2R)-2-phosphoglycerate. Glu205 (proton donor) is an active-site residue. Mg(2+) is bound by residues Asp242, Glu290, and Asp317. Positions 342, 371, 372, and 393 each coordinate (2R)-2-phosphoglycerate. The Proton acceptor role is filled by Lys342.

This sequence belongs to the enolase family. Mg(2+) serves as cofactor.

The protein localises to the cytoplasm. It localises to the secreted. It is found in the cell surface. It catalyses the reaction (2R)-2-phosphoglycerate = phosphoenolpyruvate + H2O. The protein operates within carbohydrate degradation; glycolysis; pyruvate from D-glyceraldehyde 3-phosphate: step 4/5. Its function is as follows. Catalyzes the reversible conversion of 2-phosphoglycerate (2-PG) into phosphoenolpyruvate (PEP). It is essential for the degradation of carbohydrates via glycolysis. In terms of biological role, 'Moonlights' as a collagen receptor. Binds host (human) collagen, which may contribute to pathogenicity. This Lactiplantibacillus plantarum (strain ATCC BAA-793 / NCIMB 8826 / WCFS1) (Lactobacillus plantarum) protein is Enolase 1.